Reading from the N-terminus, the 308-residue chain is uncharacterized protein (308 aa).

Residues glutamate 19 to lysine 43 form a disordered region. Pro residues predominate over residues glutamine 29–lysine 43.

This is an uncharacterized protein from Deinococcus radiodurans (strain ATCC 13939 / DSM 20539 / JCM 16871 / CCUG 27074 / LMG 4051 / NBRC 15346 / NCIMB 9279 / VKM B-1422 / R1).